The following is a 392-amino-acid chain: Formate-dependent phosphoribosylglycinamide formyltransferase (392 aa).

N(1)-(5-phospho-beta-D-ribosyl)glycinamide-binding positions include 22-23 and Glu82; that span reads EL. Residues Arg114, Lys155, 160 to 165, 195 to 198, and Glu203 each bind ATP; these read SSGKGQ and EKII. Residues 119 to 308 form the ATP-grasp domain; that stretch reads VLVSKKLNIL…EFALHVRSFL (190 aa). The Mg(2+) site is built by Glu267 and Glu279. N(1)-(5-phospho-beta-D-ribosyl)glycinamide-binding positions include Asp286, Lys355, and 362-363; that span reads RR.

This sequence belongs to the PurK/PurT family. In terms of assembly, homodimer.

It catalyses the reaction N(1)-(5-phospho-beta-D-ribosyl)glycinamide + formate + ATP = N(2)-formyl-N(1)-(5-phospho-beta-D-ribosyl)glycinamide + ADP + phosphate + H(+). The protein operates within purine metabolism; IMP biosynthesis via de novo pathway; N(2)-formyl-N(1)-(5-phospho-D-ribosyl)glycinamide from N(1)-(5-phospho-D-ribosyl)glycinamide (formate route): step 1/1. Functionally, involved in the de novo purine biosynthesis. Catalyzes the transfer of formate to 5-phospho-ribosyl-glycinamide (GAR), producing 5-phospho-ribosyl-N-formylglycinamide (FGAR). Formate is provided by PurU via hydrolysis of 10-formyl-tetrahydrofolate. This chain is Formate-dependent phosphoribosylglycinamide formyltransferase, found in Wigglesworthia glossinidia brevipalpis.